The chain runs to 131 residues: Small ribosomal subunit protein uS11 (131 aa).

This sequence belongs to the universal ribosomal protein uS11 family. Part of the 30S ribosomal subunit. Interacts with proteins S7 and S18. Binds to IF-3.

Its function is as follows. Located on the platform of the 30S subunit, it bridges several disparate RNA helices of the 16S rRNA. Forms part of the Shine-Dalgarno cleft in the 70S ribosome. This Buchnera aphidicola subsp. Acyrthosiphon pisum (strain 5A) protein is Small ribosomal subunit protein uS11.